The following is a 185-amino-acid chain: Large ribosomal subunit protein uL22 (185 aa).

The disordered stretch occupies residues 158–185; it reads AKPREDEPHKKKISKKKLARAKEKMLRE. The segment covering 167–176 has biased composition (basic residues); that stretch reads KKKISKKKLA.

The protein belongs to the universal ribosomal protein uL22 family.

The sequence is that of Large ribosomal subunit protein uL22 (RpL17) from Diaphorina citri (Asian citrus psyllid).